The chain runs to 496 residues: Cytosol aminopeptidase (496 aa).

Mn(2+) is bound by residues Lys258 and Asp263. Lys270 is an active-site residue. Mn(2+) contacts are provided by Asp281, Asp340, and Glu342. The active site involves Arg344.

This sequence belongs to the peptidase M17 family. Mn(2+) is required as a cofactor.

The protein resides in the cytoplasm. The catalysed reaction is Release of an N-terminal amino acid, Xaa-|-Yaa-, in which Xaa is preferably Leu, but may be other amino acids including Pro although not Arg or Lys, and Yaa may be Pro. Amino acid amides and methyl esters are also readily hydrolyzed, but rates on arylamides are exceedingly low.. It carries out the reaction Release of an N-terminal amino acid, preferentially leucine, but not glutamic or aspartic acids.. In terms of biological role, presumably involved in the processing and regular turnover of intracellular proteins. Catalyzes the removal of unsubstituted N-terminal amino acids from various peptides. This chain is Cytosol aminopeptidase (pepA), found in Helicobacter pylori (strain ATCC 700392 / 26695) (Campylobacter pylori).